Reading from the N-terminus, the 603-residue chain is DNA mismatch repair protein MutL (603 aa).

This sequence belongs to the DNA mismatch repair MutL/HexB family.

Its function is as follows. This protein is involved in the repair of mismatches in DNA. It is required for dam-dependent methyl-directed DNA mismatch repair. May act as a 'molecular matchmaker', a protein that promotes the formation of a stable complex between two or more DNA-binding proteins in an ATP-dependent manner without itself being part of a final effector complex. The protein is DNA mismatch repair protein MutL of Nitrobacter winogradskyi (strain ATCC 25391 / DSM 10237 / CIP 104748 / NCIMB 11846 / Nb-255).